Reading from the N-terminus, the 1122-residue chain is TSET complex member tstF (1122 aa).

Residues 88–126 (SSSASGINGTNNNNSGSNSSNNNNNNNGSLSNSPNNNNN) show a composition bias toward low complexity. Disordered stretches follow at residues 88–131 (SSSA…AFIG) and 178–215 (QTLHNRSPNNTIKLSPNSSNNDSLNNNNNNINNNSTNS). The span at 178-190 (QTLHNRSPNNTIK) shows a compositional bias: polar residues. The span at 191 to 215 (LSPNSSNNDSLNNNNNNINNNSTNS) shows a compositional bias: low complexity. WD repeat units lie at residues 298 to 337 (FENKSPNSVEFFSNSPFVAFGGPDSMIRLWNTEKWEIEKQ), 342 to 381 (PKGTIVKLKAIEIEGEFLVSGGTDGFVCVWNVKTGSLATQ), and 383 to 422 (SKVHEIVDLSYDYVTGQVMALTQDRHIMIYDLNTLKEVSK). The disordered stretch occupies residues 731–775 (NGSVGGSSSNNSANSNNSNNNNNNNNNNSNNSNNNNNSSQPILEP).

In terms of assembly, component of the TSET complex, a heterohexamer composed of tstA, tstB, tstC, tstD, tstE and tstF, which may act in plasma membrane turnover. tstA, tstB, tstC and tstD are likely to be the core complex members with tstE and tstF acting as associated scaffold proteins.

This is TSET complex member tstF from Dictyostelium discoideum (Social amoeba).